We begin with the raw amino-acid sequence, 185 residues long: Ribosome-recycling factor (185 aa).

It belongs to the RRF family.

The protein localises to the cytoplasm. Responsible for the release of ribosomes from messenger RNA at the termination of protein biosynthesis. May increase the efficiency of translation by recycling ribosomes from one round of translation to another. The sequence is that of Ribosome-recycling factor from Streptococcus pyogenes serotype M1.